The sequence spans 564 residues: Phomacin cluster regulator phmR (564 aa).

A DNA-binding region (zn(2)-C6 fungal-type) is located at residues 33–64 (CDRCRGHKLRCIRDQMTVDSPCQRCRKAREKC). 3 disordered regions span residues 68–93 (SSTR…TSSA), 152–197 (DFAD…NPFL), and 252–278 (PIHP…DSTT). Composition is skewed to polar residues over residues 182 to 192 (ITPTSQGTTAV) and 258 to 278 (MASS…DSTT).

It localises to the nucleus. Transcription factor that specifically regulates the expression of the gene cluster that mediates the biosynthesis of the mycotoxins phomacins, leucine-derived cytochalasans with potent actin polymerization-inhibitory activities and monocot-specific antigerminative activities. This Phaeosphaeria nodorum (strain SN15 / ATCC MYA-4574 / FGSC 10173) (Glume blotch fungus) protein is Phomacin cluster regulator phmR.